The primary structure comprises 1042 residues: Ubiquitin carboxyl-terminal hydrolase 38 (1042 aa).

The USP domain maps to 445-949 (TGLINLGNTC…TAYVLLYKKQ (505 aa)). The active-site Nucleophile is the cysteine 454. Histidine 857 serves as the catalytic Proton acceptor.

Belongs to the peptidase C19 family. In terms of assembly, interacts with isoform 1 of FBXW7; this interaction prevents FBXW7-mediated degradation of MYC.

It is found in the cytoplasm. The protein resides in the nucleus. The enzyme catalyses Thiol-dependent hydrolysis of ester, thioester, amide, peptide and isopeptide bonds formed by the C-terminal Gly of ubiquitin (a 76-residue protein attached to proteins as an intracellular targeting signal).. In terms of biological role, deubiquitinating enzyme that plays a role in various cellular processes, including DNA repair, cell cycle regulation, and immune response. Plays a role in the inhibition of type I interferon signaling by mediating the 'Lys-33' to 'Lys-48' ubiquitination transition of TBK1 leading to its degradation. Cleaves the ubiquitin chain from the histone demethylase LSD1/KDM1A and prevents it from degradation by the 26S proteasome, thus maintaining LSD1 protein level in cells. Plays a role in the DNA damage response by regulating the deacetylase activity of HDAC1. Mechanistically, removes the 'Lys-63'-linked ubiquitin chain promoting the deacetylase activity of HDAC1 in response to DNA damage. Also acts as a specific deubiquitinase of histone deacetylase 3/HDAC3 and cleaves its 'Lys-63'-linked ubiquitin chains to lower its histone deacetylase activity. Regulates MYC levels and cell proliferation via antagonizing ubiquitin E3 ligase FBXW7 thereby preventing MYC 'Lys-48'-linked ubiquitination and degradation. Participates in antiviral response by removing both 'Lys-48'-linked and 'Lys-63'-linked polyubiquitination of Zika virus envelope protein E. Constitutively associated with IL-33R/IL1RL1, deconjugates its 'Lys-27'-linked polyubiquitination resulting in its autophagic degradation. The protein is Ubiquitin carboxyl-terminal hydrolase 38 (Usp38) of Mus musculus (Mouse).